The following is a 212-amino-acid chain: MLAYSVTSSGLFPRMLWALLLLAASLNAHNDVWDEPCCTEHEVSVNRGSRVVMACNISNNLRDVTIELVTSEKTSIIFNHTPPGNYSKDSWQLHIQGVQAQLVITDAQDKHSGNYSWKLHGFQAEFKNFNLTVNAADRQKTEDLPVTKVPDKPPTAVRTEVIIIIAIATTIIITGIGVFVWYKQFPVAPQIQMSVPCLIHGSPGIPYLTLPP.

The signal sequence occupies residues methionine 1 to alanine 28. Topologically, residues histidine 29–glutamate 160 are extracellular. A disulfide bridge links cysteine 38 with cysteine 55. Asparagine 56, asparagine 85, asparagine 114, and asparagine 130 each carry an N-linked (GlcNAc...) asparagine glycan. Residues valine 161 to tryptophan 181 form a helical membrane-spanning segment. At tyrosine 182–proline 212 the chain is on the cytoplasmic side.

Belongs to the SECTM family. Interacts with CD7.

The protein resides in the cell membrane. It is found in the secreted. In terms of biological role, may be involved in thymocyte signaling. The chain is Secreted and transmembrane protein 1b (Sectm1b) from Mus musculus (Mouse).